A 239-amino-acid polypeptide reads, in one-letter code: Uracil-DNA glycosylase (239 aa).

Asp65 functions as the Proton acceptor in the catalytic mechanism.

Belongs to the uracil-DNA glycosylase (UDG) superfamily. UNG family.

The protein resides in the cytoplasm. The enzyme catalyses Hydrolyzes single-stranded DNA or mismatched double-stranded DNA and polynucleotides, releasing free uracil.. Excises uracil residues from the DNA which can arise as a result of misincorporation of dUMP residues by DNA polymerase or due to deamination of cytosine. The chain is Uracil-DNA glycosylase from Levilactobacillus brevis (strain ATCC 367 / BCRC 12310 / CIP 105137 / JCM 1170 / LMG 11437 / NCIMB 947 / NCTC 947) (Lactobacillus brevis).